The chain runs to 715 residues: Tensin-4 (715 aa).

The N-terminal stretch at 1–18 (MSQVMSSPLLAGGHAVSL) is a signal peptide. The residue at position 82 (S82) is a Phosphoserine. 4 disordered regions span residues 159–183 (RCHDGPQHCSSPSVTPPFGSLRSGG), 195–251 (RSSS…SPLV), 291–364 (SLLH…CPPS), and 376–435 (LING…ARDM). Residues 197–206 (SSESLIFSGN) are compositionally biased toward polar residues. Residue S248 is modified to Phosphoserine. Residues 291–325 (SLLHSSNSSHQSSSRSLESPANSSSSLHSLGSVSL) show a composition bias toward low complexity. The region spanning 449-556 (WFKPNITREQ…ALPCKLTIPQ (108 aa)) is the SH2 domain. Residues 582 to 705 (CHTLYLSSVS…QPASQVIGLV (124 aa)) enclose the PTB domain.

It belongs to the PTEN phosphatase protein family. Interacts (via SH2 domain) with Rho GTPase-activating protein DLC1 (via C-terminus); the interaction is independent of DLC1 tyrosine phosphorylation. Interacts with integrin ITGB1; the interaction displaces tensin TNS3 from the ITGB1 cytoplasmic tail and promotes ITGB1 stability. Interacts (via SH2 domain) with E3 ubiquitin-protein ligase CBL (phosphorylated on 'Tyr-774'); the interaction is enhanced in the presence of EGF and reduces interaction of CBL with EGFR. Interacts (via SH2 domain) with receptor tyrosine kinase MET (when phosphorylated); the interaction increases MET protein stability. Post-translationally, proteolytically cleaved by caspase-3 during apoptosis. As to expression, expressed at low levels in colon (at protein level). Expressed in prostate and placenta.

It is found in the cell junction. Its subcellular location is the focal adhesion. The protein resides in the cytoplasm. It localises to the cytoskeleton. Its function is as follows. Promotes EGF-induced cell migration by displacing tensin TNS3 from the cytoplasmic tail of integrin ITGB1 which results in dissociation of TNS3 from focal adhesions, disassembly of actin stress fibers and initiation of cell migration. Suppresses ligand-induced degradation of EGFR by reducing EGFR ubiquitination in the presence of EGF. Increases MET protein stability by inhibiting MET endocytosis and subsequent lysosomal degradation which leads to increased cell survival, proliferation and migration. This is Tensin-4 (TNS4) from Homo sapiens (Human).